Reading from the N-terminus, the 388-residue chain is Proline-rich protein 5 (388 aa).

2 interaction with RICTOR regions span residues 10–95 and 188–218; these read MSSP…LTKG and HESR…YGLH. The interval 12 to 31 is disordered; that stretch reads SPSLSDLGKREPAAAADERG. Residues 18–31 are compositionally biased toward basic and acidic residues; it reads LGKREPAAAADERG. Serine 252 carries the phosphoserine modification. Residues 254–388 form a disordered region; it reads SYNTPLLNPV…EGSGGRQSVV (135 aa). Polar residues predominate over residues 336 to 346; that stretch reads TRSSLPRSSPE.

It belongs to the PROTOR family. Associated component of the mechanistic target of rapamycin complex 2 (mTORC2). Binds directly to MTOR and RICTOR within the TORC2 complex. In terms of tissue distribution, most abundant in kidney and liver. Also highly expressed in brain, spleen, testis and placenta. Overexpressed in several colorectal tumors.

Functionally, associated subunit of mTORC2, which regulates cell growth and survival in response to hormonal signals. mTORC2 is activated by growth factors, but, in contrast to mTORC1, seems to be nutrient-insensitive. mTORC2 seems to function upstream of Rho GTPases to regulate the actin cytoskeleton, probably by activating one or more Rho-type guanine nucleotide exchange factors. PRR5 plays an important role in regulation of PDGFRB expression and in modulation of platelet-derived growth factor signaling. May act as a tumor suppressor in breast cancer. The chain is Proline-rich protein 5 (PRR5) from Homo sapiens (Human).